An 80-amino-acid chain; its full sequence is MTEQEIFEKVKAVIADKLQVEPEKVTLEARFIEDLGADSLDTVELIMGLEDEFGLEISDEEAEKIRTVKDAVEYIKAKLG.

In terms of domain architecture, Carrier spans 4–79 (QEIFEKVKAV…DAVEYIKAKL (76 aa)). An O-(pantetheine 4'-phosphoryl)serine modification is found at S39.

Belongs to the acyl carrier protein (ACP) family. In terms of processing, 4'-phosphopantetheine is transferred from CoA to a specific serine of apo-ACP by AcpS. This modification is essential for activity because fatty acids are bound in thioester linkage to the sulfhydryl of the prosthetic group.

It localises to the cytoplasm. It participates in lipid metabolism; fatty acid biosynthesis. Functionally, carrier of the growing fatty acid chain in fatty acid biosynthesis. The chain is Acyl carrier protein from Thermus thermophilus (strain ATCC BAA-163 / DSM 7039 / HB27).